A 318-amino-acid polypeptide reads, in one-letter code: Ubiquitin-like domain-containing CTD phosphatase 1 (318 aa).

The Ubiquitin-like domain maps to 3 to 81 (LSLIIKWGGQ…IMMMGTREES (79 aa)). The FCP1 homology domain maps to 133–294 (PREGKKLLVL…LKLSQYLKEI (162 aa)). Aspartate 143, aspartate 145, and aspartate 253 together coordinate Mg(2+).

It depends on Mg(2+) as a cofactor.

It localises to the nucleus. The enzyme catalyses O-phospho-L-seryl-[protein] + H2O = L-seryl-[protein] + phosphate. The catalysed reaction is O-phospho-L-threonyl-[protein] + H2O = L-threonyl-[protein] + phosphate. Functionally, dephosphorylates 26S nuclear proteasomes, thereby decreasing their proteolytic activity. Recruited to the 19S regulatory particle of the 26S proteasome where it dephosphorylates 19S component psmc2 which impairs psmc2 ATPase activity and disrupts 26S proteasome assembly. Has also been reported to stimulate the proteolytic activity of the 26S proteasome. The sequence is that of Ubiquitin-like domain-containing CTD phosphatase 1 (ublcp1) from Xenopus tropicalis (Western clawed frog).